Here is a 31-residue protein sequence, read N- to C-terminus: Cycloviolacin-O23 (31 aa).

Positions G1–N31 form a cross-link, cyclopeptide (Gly-Asn). Disulfide bonds link C5–C19, C9–C21, and C14–C28.

This is a cyclic peptide. In terms of tissue distribution, expressed in leaves but not in petals, petioles, roots and runners (at protein level).

In terms of biological role, probably participates in a plant defense mechanism. The sequence is that of Cycloviolacin-O23 from Viola odorata (Sweet violet).